The following is a 1388-amino-acid chain: DNA-directed RNA polymerase subunit beta' (1388 aa).

Zn(2+) is bound by residues cysteine 76, cysteine 78, cysteine 91, and cysteine 94. Residues aspartate 467, aspartate 469, and aspartate 471 each coordinate Mg(2+). Residues cysteine 810, cysteine 884, cysteine 891, and cysteine 894 each coordinate Zn(2+).

The protein belongs to the RNA polymerase beta' chain family. As to quaternary structure, the RNAP catalytic core consists of 2 alpha, 1 beta, 1 beta' and 1 omega subunit. When a sigma factor is associated with the core the holoenzyme is formed, which can initiate transcription. The cofactor is Mg(2+). It depends on Zn(2+) as a cofactor.

It catalyses the reaction RNA(n) + a ribonucleoside 5'-triphosphate = RNA(n+1) + diphosphate. Functionally, DNA-dependent RNA polymerase catalyzes the transcription of DNA into RNA using the four ribonucleoside triphosphates as substrates. The chain is DNA-directed RNA polymerase subunit beta' from Lawsonia intracellularis (strain PHE/MN1-00).